The following is a 902-amino-acid chain: HTH-type transcriptional regulator MalT (902 aa).

ATP is bound at residue 39–46 (SPAGYGKT). One can recognise an HTH luxR-type domain in the interval 832-897 (ELVRTSPLTQ…EAVQTAEQLL (66 aa)). A DNA-binding region (H-T-H motif) is located at residues 856-875 (NEQIAHELDVAGTTIKTHIR).

It belongs to the MalT family. Monomer in solution. Oligomerizes to an active state in the presence of the positive effectors ATP and maltotriose.

Activated by ATP and maltotriose, which are both required for DNA binding. Functionally, positively regulates the transcription of the maltose regulon whose gene products are responsible for uptake and catabolism of malto-oligosaccharides. Specifically binds to the promoter region of its target genes, recognizing a short DNA motif called the MalT box. The protein is HTH-type transcriptional regulator MalT of Vibrio cholerae serotype O1 (strain ATCC 39315 / El Tor Inaba N16961).